A 412-amino-acid chain; its full sequence is MSVPTHQQDLIALLEERGFVHQCTDRDGLAAHLAAGPATAYLGFDATADSLHVGHLQGLMLMRWLQKAGHRPLLLIGGATTRIGDPSFRDSSRPILTEAQIQANIDGIARVFSRYVELHDDSLVNNAEWLDGVGYLEFLDRVGRHFSINRLLTFDAIRQRLDREHSLSFLEFGYTLLQAYDFVELSRRRGCTLQLGGADQWANIINGVELSRRQGGAQLFGLTMPLLATSDGRKMGKSAQGAVWLNAERLAPFDFWQFWRNCDDRDVGRFLALFSELPMDEVRRLGALQGAELNEAKVVLANAATALAHGEHAARSAADAARGVFADGTRDSGLPVMKLSRARLAQGLSLTDLLLEHAIQPSRSAVRRLAAGGGLRLDGTPVSDPDAPLAGEVDGLRLSLGKKQHLHLRLED.

Residue Tyr-41 coordinates L-tyrosine. A 'HIGH' region motif is present at residues 46–55 (ATADSLHVGH). 2 residues coordinate L-tyrosine: Tyr-174 and Gln-178. A 'KMSKS' region motif is present at residues 234 to 238 (KMGKS). Lys-237 contacts ATP. Residues 348–411 (LSLTDLLLEH…KKQHLHLRLE (64 aa)) enclose the S4 RNA-binding domain.

It belongs to the class-I aminoacyl-tRNA synthetase family. TyrS type 1 subfamily. In terms of assembly, homodimer.

Its subcellular location is the cytoplasm. It carries out the reaction tRNA(Tyr) + L-tyrosine + ATP = L-tyrosyl-tRNA(Tyr) + AMP + diphosphate + H(+). Catalyzes the attachment of tyrosine to tRNA(Tyr) in a two-step reaction: tyrosine is first activated by ATP to form Tyr-AMP and then transferred to the acceptor end of tRNA(Tyr). The chain is Tyrosine--tRNA ligase from Pseudomonas aeruginosa (strain LESB58).